A 240-amino-acid polypeptide reads, in one-letter code: Prolactin-8A6 (240 aa).

A signal peptide spans 1 to 30; sequence MALLLSQPHFSGPLLLLVVSNLLLWEKAAS. Cystine bridges form between cysteine 34–cysteine 41, cysteine 101–cysteine 216, and cysteine 233–cysteine 240. N-linked (GlcNAc...) asparagine glycosylation is present at asparagine 212.

It belongs to the somatotropin/prolactin family. As to expression, expressed specifically in the spongiotrophoblast and trophoblast giant cells from the junctional zone of the chorioallantoic placenta.

It is found in the secreted. This chain is Prolactin-8A6 (Prl8a6), found in Mus musculus (Mouse).